Reading from the N-terminus, the 413-residue chain is Protein CDKN2AIP homolog B (413 aa).

The XRN2-binding (XTBD) domain maps to 21 to 118; sequence LERVRGQCES…TTRDELVAKV (98 aa). The tract at residues 118-266 is disordered; the sequence is VKKRGNSSSN…PTRRFTTEHT (149 aa). Residues 183-193 show a composition bias toward basic and acidic residues; it reads NKREAHSRTDV.

The protein belongs to the CARF family.

The protein localises to the nucleus. The protein resides in the nucleoplasm. In terms of biological role, may regulate DNA damage response and cell proliferation. In Xenopus laevis (African clawed frog), this protein is Protein CDKN2AIP homolog B (cdkn2aip-b).